Here is a 1365-residue protein sequence, read N- to C-terminus: Serine-aspartate repeat-containing protein D (1365 aa).

Residues methionine 1–isoleucine 35 form the signal peptide. The short motif at phenylalanine 23–serine 34 is the YSIRK-G/S signaling motif element. Residues leucine 36–glutamate 568 form a ligand binding A region region. The tract at residues glutamate 54 to serine 185 is disordered. Composition is skewed to polar residues over residues glutamate 62–glutamine 71 and glutamate 94–lysine 109. A compositionally biased stretch (basic and acidic residues) spans lysine 130 to asparagine 145. 2 stretches are compositionally biased toward polar residues: residues threonine 146–alanine 155 and asparagine 163–asparagine 173. Positions glutamate 174–threonine 183 are enriched in basic and acidic residues. CNA-B domains lie at valine 569–proline 680, lysine 681–proline 791, lysine 792–proline 901, threonine 902–proline 1012, and lysine 1013–threonine 1123. 3 disordered regions span residues glutamate 857–glycine 884, tyrosine 972–threonine 991, and glutamate 1078–alanine 1341. Composition is skewed to polar residues over residues serine 860–serine 869 and tyrosine 972–asparagine 981. Acidic residues-rich tracts occupy residues threonine 1091–glutamate 1101 and tyrosine 1118–serine 1304. Residues leucine 1328–glycine 1332 carry the LPXTG sorting signal motif. Threonine 1331 carries the post-translational modification Pentaglycyl murein peptidoglycan amidated threonine. Positions glycine 1332–lysine 1365 are cleaved as a propeptide — removed by sortase.

This sequence belongs to the serine-aspartate repeat-containing protein (SDr) family. Interacts with host DSG1; this interaction increases S.aureus adherence to keratinocytes.

The protein resides in the secreted. Its subcellular location is the cell wall. Cell surface-associated calcium-binding protein which plays an important role in adhesion and pathogenesis. Mediates interactions with components of the extracellular matrix such as host DSG1 to promote bacterial adhesion to host cells. Contributes to the resistance to killing by innate immune components such as neutrophils present in blood and thus attenuates bacterial clearance. The protein is Serine-aspartate repeat-containing protein D (sdrD) of Staphylococcus aureus (strain MSSA476).